A 374-amino-acid polypeptide reads, in one-letter code: Glutamate 5-kinase (374 aa).

Lys-17 contributes to the ATP binding site. The substrate site is built by Ser-57, Asp-144, and Asn-156. ATP is bound by residues 176–177 (SD) and 218–224 (TGGMVTK). The PUA domain maps to 280 to 358 (QGALVLDDGA…RELARELGPA (79 aa)).

The protein belongs to the glutamate 5-kinase family.

It is found in the cytoplasm. The enzyme catalyses L-glutamate + ATP = L-glutamyl 5-phosphate + ADP. It functions in the pathway amino-acid biosynthesis; L-proline biosynthesis; L-glutamate 5-semialdehyde from L-glutamate: step 1/2. Catalyzes the transfer of a phosphate group to glutamate to form L-glutamate 5-phosphate. The sequence is that of Glutamate 5-kinase from Streptomyces coelicolor (strain ATCC BAA-471 / A3(2) / M145).